The sequence spans 302 residues: UDP-N-acetylenolpyruvoylglucosamine reductase (302 aa).

Residues 27-192 enclose the FAD-binding PCMH-type domain; the sequence is KTGGPADYVA…VSVTFGLKPG (166 aa). R171 is an active-site residue. Residue S221 is the Proton donor of the active site. E291 is a catalytic residue.

The protein belongs to the MurB family. FAD serves as cofactor.

Its subcellular location is the cytoplasm. It carries out the reaction UDP-N-acetyl-alpha-D-muramate + NADP(+) = UDP-N-acetyl-3-O-(1-carboxyvinyl)-alpha-D-glucosamine + NADPH + H(+). It functions in the pathway cell wall biogenesis; peptidoglycan biosynthesis. Functionally, cell wall formation. This chain is UDP-N-acetylenolpyruvoylglucosamine reductase, found in Lactiplantibacillus plantarum (strain ATCC BAA-793 / NCIMB 8826 / WCFS1) (Lactobacillus plantarum).